The primary structure comprises 535 residues: Probable lipid II flippase MurJ (535 aa).

Transmembrane regions (helical) follow at residues 90 to 110 (VLFT…PFIV), 131 to 151 (FATI…MAGM), 159 to 179 (FAAA…LAYA), 192 to 212 (DLSW…WVAV), 233 to 253 (LLVL…NLLI), 274 to 294 (IYQL…LPEL), 316 to 336 (FTLF…EPIV), 350 to 370 (TVVV…FVLI), 388 to 408 (IFAG…FPSL), 413 to 433 (IATA…ATLV), 451 to 471 (LVIA…WLAF), and 484 to 504 (LTLC…AFGI).

It belongs to the MurJ/MviN family.

The protein resides in the cell inner membrane. The protein operates within cell wall biogenesis; peptidoglycan biosynthesis. Its function is as follows. Involved in peptidoglycan biosynthesis. Transports lipid-linked peptidoglycan precursors from the inner to the outer leaflet of the cytoplasmic membrane. The sequence is that of Probable lipid II flippase MurJ from Rhizobium meliloti (strain 1021) (Ensifer meliloti).